The chain runs to 297 residues: N-acetylmuramic acid 6-phosphate etherase (297 aa).

One can recognise an SIS domain in the interval 55 to 218 (AAAALKSGGR…STGAMVKFGK (164 aa)). Glu83 serves as the catalytic Proton donor. Glu114 is a catalytic residue.

This sequence belongs to the GCKR-like family. MurNAc-6-P etherase subfamily. Homodimer.

It carries out the reaction N-acetyl-D-muramate 6-phosphate + H2O = N-acetyl-D-glucosamine 6-phosphate + (R)-lactate. The protein operates within amino-sugar metabolism; 1,6-anhydro-N-acetylmuramate degradation. It functions in the pathway amino-sugar metabolism; N-acetylmuramate degradation. Its pathway is cell wall biogenesis; peptidoglycan recycling. Functionally, specifically catalyzes the cleavage of the D-lactyl ether substituent of MurNAc 6-phosphate, producing GlcNAc 6-phosphate and D-lactate. Together with AnmK, is also required for the utilization of anhydro-N-acetylmuramic acid (anhMurNAc) either imported from the medium or derived from its own cell wall murein, and thus plays a role in cell wall recycling. This Salmonella schwarzengrund (strain CVM19633) protein is N-acetylmuramic acid 6-phosphate etherase.